Reading from the N-terminus, the 445-residue chain is Argininosuccinate synthase (445 aa).

Residues 17–25 (AFSGGLDTS) and Ala43 each bind ATP. Tyr99 provides a ligand contact to L-citrulline. Residues Gly129 and Thr131 each coordinate ATP. Positions 131, 135, and 136 each coordinate L-aspartate. Asn135 is a binding site for L-citrulline. An ATP-binding site is contributed by Asp136. Arg139 and Ser192 together coordinate L-citrulline. Residue Asp194 participates in ATP binding. L-citrulline contacts are provided by Thr201, Glu203, and Glu280.

The protein belongs to the argininosuccinate synthase family. Type 2 subfamily. Homotetramer.

The protein resides in the cytoplasm. The enzyme catalyses L-citrulline + L-aspartate + ATP = 2-(N(omega)-L-arginino)succinate + AMP + diphosphate + H(+). It functions in the pathway amino-acid biosynthesis; L-arginine biosynthesis; L-arginine from L-ornithine and carbamoyl phosphate: step 2/3. In Burkholderia ambifaria (strain MC40-6), this protein is Argininosuccinate synthase.